The sequence spans 466 residues: Cysteine--tRNA ligase (466 aa).

C29 is a binding site for Zn(2+). The 'HIGH' region motif lies at 31 to 41; the sequence is PTVYNYIHIGN. C209, H234, and E238 together coordinate Zn(2+). Residues 266–270 carry the 'KMSKS' region motif; it reads KMSKS. K269 is an ATP binding site.

The protein belongs to the class-I aminoacyl-tRNA synthetase family. In terms of assembly, monomer. The cofactor is Zn(2+).

Its subcellular location is the cytoplasm. It carries out the reaction tRNA(Cys) + L-cysteine + ATP = L-cysteinyl-tRNA(Cys) + AMP + diphosphate. This Lysinibacillus sphaericus (strain C3-41) protein is Cysteine--tRNA ligase.